Reading from the N-terminus, the 754-residue chain is Pentatricopeptide repeat-containing protein At3g53700, chloroplastic (754 aa).

Residues 1–72 (MAFSSCLKFY…DSAALRLFNL (72 aa)) constitute a chloroplast transit peptide. PPR repeat units lie at residues 82–116 (EPALYEEILLRLGRSGSFDDMKKILEDMKSSRCEM), 117–152 (GTSTFLILIESYAQFELQDEILSVVDWMIDEFGLKP), 153–187 (DTHFYNRMLNLLVDGNSLKLVEISHAKMSVWGIKP), 188–222 (DVSTFNVLIKALCRAHQLRPAILMLEDMPSYGLVP), 223–257 (DEKTFTTVMQGYIEEGDLDGALRIREQMVEFGCSW), 258–288 (SNVSVNVIVHGFCKEGRVEDALNFIQEMSNQ), 294–328 (DQYTFNTLVNGLCKAGHVKHAIEIMDVMLQEGYDP), 329–363 (DVYTYNSVISGLCKLGEVKEAVEVLDQMITRDCSP), 364–398 (NTVTYNTLISTLCKENQVEEATELARVLTSKGILP), 399–433 (DVCTFNSLIQGLCLTRNHRVAMELFEEMRSKGCEP), 434–468 (DEFTYNMLIDSLCSKGKLDEALNMLKQMELSGCAR), 469–503 (SVITYNTLIDGFCKANKTREAEEIFDEMEVHGVSR), 504–538 (NSVTYNTLIDGLCKSRRVEDAAQLMDQMIMEGQKP), 539–573 (DKYTYNSLLTHFCRGGDIKKAADIVQAMTSNGCEP), 574–608 (DIVTYGTLISGLCKAGRVEVASKLLRSIQMKGINL), 609–643 (TPHAYNPVIQGLFRKRKTTEAINLFREMLEQNEAP), and 645–680 (DAVSYRIVFRGLCNGGGPIREAVDFLVELLEKGFVP).

Belongs to the PPR family. P subfamily.

The protein localises to the plastid. It localises to the chloroplast. In terms of biological role, may be involved in female gametophyte development. The sequence is that of Pentatricopeptide repeat-containing protein At3g53700, chloroplastic (MEE40) from Arabidopsis thaliana (Mouse-ear cress).